Here is a 155-residue protein sequence, read N- to C-terminus: Ribosomal RNA large subunit methyltransferase H (155 aa).

Residues Leu73, Gly104, and 123–128 (LSPLTL) contribute to the S-adenosyl-L-methionine site.

It belongs to the RNA methyltransferase RlmH family. Homodimer.

Its subcellular location is the cytoplasm. It catalyses the reaction pseudouridine(1915) in 23S rRNA + S-adenosyl-L-methionine = N(3)-methylpseudouridine(1915) in 23S rRNA + S-adenosyl-L-homocysteine + H(+). Its function is as follows. Specifically methylates the pseudouridine at position 1915 (m3Psi1915) in 23S rRNA. The chain is Ribosomal RNA large subunit methyltransferase H from Pseudomonas aeruginosa (strain LESB58).